The following is a 414-amino-acid chain: MKNKYYPVRTSMDEMNAKNDNEIDLEKGPLPEYNSEDGSTLPPYSENLNLKDPKQMGANNPNLFNTDESTTPPDYGEDSLSNTHRENHSSGTADNSSPFLIKLLISFIPIFVLNVPAVCYLTYKDALFKDYGKDEWVYFGVWCAICLMIFISLWCFYETWTQAVAQCVKVTVIFLAQCIKVTVISLAQCVKVTAIFLAQCIKVTVISLAQCVKVTAIFLAKCVKVTVISLAKCVKVISIGLFNIRREMMIIIWILWLIICCILFGCVKDGRLNFNKALICSTCTISAVLFLIVSSVCIPIWTLWRALSGMLQVLGIHGIIAVLVNGLMSLFGKHFGWRGYEIEGFVLFFTSSALFLYEMERPGVLKRLRNTTGNVIGYICGGIEDAFRRIKNAFRGANDNNNIPLGEMDVEGEV.

A disordered region spans residues 1 to 94 (MKNKYYPVRT…RENHSSGTAD (94 aa)). A compositionally biased stretch (basic and acidic residues) spans 11–29 (SMDEMNAKNDNEIDLEKGP). The span at 57–72 (GANNPNLFNTDESTTP) shows a compositional bias: polar residues. Helical transmembrane passes span 99 to 119 (FLIK…PAVC), 136 to 156 (WVYF…LWCF), 170 to 190 (VTVI…AQCV), 192 to 212 (VTAI…AQCV), 222 to 242 (CVKV…IGLF), 247 to 267 (EMMI…FGCV), 284 to 304 (TISA…WTLW), 311 to 331 (LQVL…MSLF), and 339 to 359 (GYEI…LYEM).

Belongs to the WTF family. In terms of assembly, homomer. Forms protein aggregates. The two isoforms can interact with each other and with themselves. High sequence similarity is required for their interaction.

The protein localises to the spore membrane. The protein resides in the vacuole membrane. Its subcellular location is the ascus epiplasm. It localises to the cytoplasm. It is found in the endoplasmic reticulum membrane. Promotes unequal transmission of alleles from the parental zygote to progeny spores by acting as poison/antidote system where the poison and antidote proteins are produced from the same locus; the poison component is trans-acting and targets all spores within an ascus whereas the antidote component is spore-specific, leading to poisoning of all progeny that do not inherit the allele. Its function is as follows. Localizes isoform 2 to the vacuole thereby facilitating its degradation. In terms of biological role, forms toxic aggregates that disrupt spore maturation. The protein is Meiotic driver wtf19 of Schizosaccharomyces kambucha (Fission yeast).